The sequence spans 436 residues: Envelope glycoprotein (436 aa).

Met1 is a signal peptide. At 2 to 436 (ANPSPHQIYN…GGLTVGGIAA (435 aa)) the chain is on the extracellular side. 2 N-linked (GlcNAc...) asparagine; by host glycosylation sites follow: Asn11 and Asn26. Disulfide bonds link Cys95/Cys117 and Cys109/Cys122. Positions 203-255 (PPQAMGPNLVLPDQKPPSRQSQTGSKVATQRPQTNESAPRSVGPTTMGPKRIG) are disordered. Residues 219-240 (PSRQSQTGSKVATQRPQTNESA) are compositionally biased toward polar residues. 3 N-linked (GlcNAc...) asparagine; by host glycosylation sites follow: Asn237, Asn272, and Asn277. Residues 282–285 (CWLC) carry the CXXC motif. Residues Asn304, Asn344, Asn360, and Asn380 are each glycosylated (N-linked (GlcNAc...) asparagine; by host).

As to quaternary structure, the mature envelope protein (Env) consists of a trimer of SU-TM heterodimers attached by a labile interchain disulfide bond. In terms of processing, specific enzymatic cleavages in vivo yield mature proteins. Envelope glycoproteins are synthesized as an inactive precursor that is N-glycosylated and processed likely by host cell furin or by a furin-like protease in the Golgi to yield the mature SU and TM proteins. The cleavage site between SU and TM requires the minimal sequence [KR]-X-[KR]-R.

It localises to the virion membrane. The protein localises to the host cell membrane. Its function is as follows. The surface protein (SU) attaches the virus to the host cell by binding to its receptor. This interaction triggers the refolding of the transmembrane protein (TM) and is thought to activate its fusogenic potential by unmasking its fusion peptide. Fusion occurs at the host cell plasma membrane. In terms of biological role, the transmembrane protein (TM) acts as a class I viral fusion protein. Under the current model, the protein has at least 3 conformational states: pre-fusion native state, pre-hairpin intermediate state, and post-fusion hairpin state. During viral and target cell membrane fusion, the coiled coil regions (heptad repeats) assume a trimer-of-hairpins structure, positioning the fusion peptide in close proximity to the C-terminal region of the ectodomain. The formation of this structure appears to drive apposition and subsequent fusion of viral and target cell membranes. Membranes fusion leads to delivery of the nucleocapsid into the cytoplasm. The sequence is that of Envelope glycoprotein from Feline leukemia virus (strain C/FS246).